Reading from the N-terminus, the 258-residue chain is Ribonuclease PH (258 aa).

Phosphate-binding positions include R86 and 124–126; that span reads GTR.

This sequence belongs to the RNase PH family. As to quaternary structure, homohexameric ring arranged as a trimer of dimers.

It catalyses the reaction tRNA(n+1) + phosphate = tRNA(n) + a ribonucleoside 5'-diphosphate. Phosphorolytic 3'-5' exoribonuclease that plays an important role in tRNA 3'-end maturation. Removes nucleotide residues following the 3'-CCA terminus of tRNAs; can also add nucleotides to the ends of RNA molecules by using nucleoside diphosphates as substrates, but this may not be physiologically important. Probably plays a role in initiation of 16S rRNA degradation (leading to ribosome degradation) during starvation. The protein is Ribonuclease PH of Caldicellulosiruptor saccharolyticus (strain ATCC 43494 / DSM 8903 / Tp8T 6331).